Here is a 474-residue protein sequence, read N- to C-terminus: Probable multidrug resistance protein NorM (474 aa).

The next 12 helical transmembrane spans lie at 33–50 (LWLAWPMALTQLGQIAMM), 65–87 (VAAAALAHFVLFSTFTMGLGLVS), 108–130 (SLRVGLWAGVIAGVPLTLGQLYG), 150–172 (YLDGLAWSLVPGWLFIALRGLMG), 179–201 (PALWIMLTAIPINLGLAYVLIHG), 211–233 (FGAGLATSIVSWAMCIAAAVVCV), 258–280 (LLQLGLPISGASVLEYGVFGAAA), 295–317 (QIALQVAAIMFMVPMGISVAATV), 334–356 (AGFAAIGLGFVFMAAMTLLVALT), 376–398 (TLTAALLIVGASFFIADGLQVVA), 410–432 (VPLLFAVLGFWVIGFPFCWVLGF), and 436–458 (LGPFGVWIGLAVGLVVYAALLVW).

It belongs to the multi antimicrobial extrusion (MATE) (TC 2.A.66.1) family.

The protein resides in the cell inner membrane. Multidrug efflux pump. This Rhodopseudomonas palustris (strain ATCC BAA-98 / CGA009) protein is Probable multidrug resistance protein NorM (norM).